Reading from the N-terminus, the 195-residue chain is uncharacterized protein (195 aa).

This is an uncharacterized protein from Archaeoglobus fulgidus (strain ATCC 49558 / DSM 4304 / JCM 9628 / NBRC 100126 / VC-16).